A 281-amino-acid chain; its full sequence is N-methyltransferase tcpN (281 aa).

This sequence belongs to the methyltransferase superfamily. LaeA methyltransferase family.

It functions in the pathway secondary metabolite biosynthesis. In terms of biological role, N-methyltransferase; part of the gene cluster that mediates the biosynthesis of an unusual class of epipolythiodioxopiperazines (ETPs) lacking the reactive thiol group important for toxicity. Firstly, L-tyrosine is prenylated by tcpD, before undergoing condensation with L-glycine in a reaction catalyzed by the NRPS tcpP leading to the diketopiperazine (DKP) backbone. Afterwards the alpha-carbon of tyrosine is oxidized by the cytochrome P450 tcpC to form a hydroxyl group. However, in contrast other ETP biosynthesis pathways studied so far, tcpC is not able to bishydroxylate the DKP at both alpha-carbon positions, but hydroxylates the alpha-carbon of the tyrosine part and the nitrogen of the glycine part. The next steps involve an alpha,beta-elimination reaction catalyzed by tcpI, a methylation by the methyltransferase tcpN the action of the four enzyme cascade tcpG/K/J/I. Due to a dysfunctional cytochrome P450 monooxygenase tcpC, the pathway leads to the biosynthesis of probable non-toxic metabolites lacking the reactive thiol group. The chain is N-methyltransferase tcpN from Claviceps purpurea (strain 20.1) (Ergot fungus).